Consider the following 165-residue polypeptide: Peptide methionine sulfoxide reductase MsrA (165 aa).

The active site involves cysteine 10.

The protein belongs to the MsrA Met sulfoxide reductase family.

The catalysed reaction is L-methionyl-[protein] + [thioredoxin]-disulfide + H2O = L-methionyl-(S)-S-oxide-[protein] + [thioredoxin]-dithiol. It carries out the reaction [thioredoxin]-disulfide + L-methionine + H2O = L-methionine (S)-S-oxide + [thioredoxin]-dithiol. In terms of biological role, has an important function as a repair enzyme for proteins that have been inactivated by oxidation. Catalyzes the reversible oxidation-reduction of methionine sulfoxide in proteins to methionine. The chain is Peptide methionine sulfoxide reductase MsrA from Campylobacter jejuni subsp. jejuni serotype O:6 (strain 81116 / NCTC 11828).